The following is a 168-amino-acid chain: Photosystem I assembly protein Ycf3 (168 aa).

TPR repeat units follow at residues Ala-35–Pro-68, Ser-72–Leu-105, and Gly-120–Asn-153.

It belongs to the Ycf3 family.

It localises to the plastid. It is found in the chloroplast thylakoid membrane. Functionally, essential for the assembly of the photosystem I (PSI) complex. May act as a chaperone-like factor to guide the assembly of the PSI subunits. The chain is Photosystem I assembly protein Ycf3 from Piper cenocladum (Ant piper).